The chain runs to 126 residues: Fluoride-specific ion channel FluC (126 aa).

Transmembrane regions (helical) follow at residues 5-25 (VLAV…LGLW), 35-55 (WGTL…MAFF), 68-88 (FAVT…LEMF), and 99-119 (ALVG…LGFL). Residues glycine 75 and threonine 78 each contribute to the Na(+) site.

Belongs to the fluoride channel Fluc/FEX (TC 1.A.43) family.

It localises to the cell inner membrane. It catalyses the reaction fluoride(in) = fluoride(out). With respect to regulation, na(+) is not transported, but it plays an essential structural role and its presence is essential for fluoride channel function. Functionally, fluoride-specific ion channel. Important for reducing fluoride concentration in the cell, thus reducing its toxicity. In Marinobacter nauticus (strain ATCC 700491 / DSM 11845 / VT8) (Marinobacter aquaeolei), this protein is Fluoride-specific ion channel FluC.